We begin with the raw amino-acid sequence, 304 residues long: Acetaldehyde dehydrogenase 1 (304 aa).

11–14 (SGNI) is a binding site for NAD(+). Cys-130 acts as the Acyl-thioester intermediate in catalysis. Residues 161 to 169 (SVGPGTRAN) and Asn-272 each bind NAD(+).

Belongs to the acetaldehyde dehydrogenase family.

It catalyses the reaction acetaldehyde + NAD(+) + CoA = acetyl-CoA + NADH + H(+). The polypeptide is Acetaldehyde dehydrogenase 1 (lapF) (Azoarcus sp. (strain BH72)).